Here is a 307-residue protein sequence, read N- to C-terminus: MAKQKFKITNWSTYNKALINRGSLTFWLDDGAIQAWYESATPSSRGRPQRYSDLAITTVLVIKRVFRLTLRAAQGFIDSIFTLMNVPLRCPDYSCVSRRAKSVNISFKTFTRGEIAHLVIDSTGLKVFGEGEWKVKKHGQERRRIWRKLHLAVDSKTHEIICADLSLNNVTDSEAFPGLIRQTHRKIRAASADGAYDTRLCHDELRRKKISALIPPRKGAGYWPGEYADRNRAVANQRMTGSNARWKWTTDYNRRSIAETAMYRVKQLFGGSLTLRDYDGQVAEAMALVRALNKMTKAGMPESVRIA.

Required for transposition of transposon Tn903. This chain is Probable transposase for transposon Tn903, found in Escherichia coli.